The sequence spans 43 residues: Protein PsbN (43 aa).

A helical membrane pass occupies residues 7 to 27 (LSISIGVMVVAITGFSIYTAF).

Belongs to the PsbN family.

It localises to the cellular thylakoid membrane. In terms of biological role, may play a role in photosystem I and II biogenesis. This chain is Protein PsbN, found in Trichodesmium erythraeum (strain IMS101).